A 492-amino-acid chain; its full sequence is Malonyl-CoA decarboxylase, mitochondrial (492 aa).

Residues Met-1–Ala-38 constitute a mitochondrion transit peptide. The alpha-helical domain stretch occupies residues Met-39–Phe-189. Position 58 is an N6-acetyllysine (Lys-58). Position 167 is an N6-acetyllysine; alternate (Lys-167). Lys-167 carries the N6-succinyllysine; alternate modification. The tract at residues Ser-190 to Leu-492 is catalytic domain. Lys-210 carries the N6-acetyllysine modification. Lys-221 bears the N6-succinyllysine mark. Gln-298 to Thr-304 lines the malonyl-CoA pocket. An N6-acetyllysine modification is found at Lys-316. Residue Ser-328 coordinates malonyl-CoA. Ser-328 functions as the Proton acceptor in the catalytic mechanism. Residue Lys-385 is modified to N6-acetyllysine; alternate. At Lys-385 the chain carries N6-succinyllysine; alternate. An N6-acetyllysine modification is found at Lys-388. Malonyl-CoA is bound at residue His-422. The active-site Proton donor is the His-422. Lys-441 and Lys-471 each carry N6-acetyllysine. The Microbody targeting signal motif lies at Ser-490–Leu-492.

As to quaternary structure, homotetramer. Dimer of dimers. The two subunits within a dimer display conformational differences suggesting that at any given moment, only one of the two subunits is competent for malonyl-CoA binding and catalytic activity. Under oxidizing conditions, can form disulfide-linked homotetramers (in vitro). Associates with the peroxisomal targeting signal receptor PEX5. In terms of processing, acetylation at Lys-471 activates malonyl-CoA decarboxylase activity. Deacetylation at Lys-471 by SIRT4 represses activity, leading to promote lipogenesis. Interchain disulfide bonds may form in peroxisomes (Potential). Interchain disulfide bonds are not expected to form in the reducing environment of the cytoplasm and mitochondria. Expressed in liver, heart, skeletal muscles and adipose tissues (at protein level). Ubiquitous. Strongly expressed in liver, kidney, heart, skeletal muscle and adipose tissues. Weakly expressed in brain.

It localises to the cytoplasm. The protein resides in the mitochondrion matrix. The protein localises to the peroxisome. It is found in the peroxisome matrix. It catalyses the reaction malonyl-CoA + H(+) = acetyl-CoA + CO2. It functions in the pathway metabolic intermediate biosynthesis; acetyl-CoA biosynthesis; acetyl-CoA from malonyl-CoA: step 1/1. Its activity is regulated as follows. Malonyl-CoA decarboxylase activity does not require any cofactors or divalent metal ions. Catalyzes the conversion of malonyl-CoA to acetyl-CoA. In the fatty acid biosynthesis MCD selectively removes malonyl-CoA and thus assures that methyl-malonyl-CoA is the only chain elongating substrate for fatty acid synthase and that fatty acids with multiple methyl side chains are produced. In peroxisomes it may be involved in degrading intraperoxisomal malonyl-CoA, which is generated by the peroxisomal beta-oxidation of odd chain-length dicarboxylic fatty acids. Plays a role in the metabolic balance between glucose and lipid oxidation in muscle independent of alterations in insulin signaling. May play a role in controlling the extent of ischemic injury by promoting glucose oxidation. The chain is Malonyl-CoA decarboxylase, mitochondrial from Rattus norvegicus (Rat).